The following is a 362-amino-acid chain: Flotillin-like protein FloA 2 (362 aa).

A helical membrane pass occupies residues 24-44 (TALLIGALVIFAGIVVVLFIF).

Belongs to the flotillin-like FloA family. In terms of assembly, homooligomerizes.

It localises to the cell membrane. The protein resides in the membrane raft. Functionally, found in functional membrane microdomains (FMM) that may be equivalent to eukaryotic membrane rafts. FMMs are highly dynamic and increase in number as cells age. Flotillins are thought to be important factors in membrane fluidity. The chain is Flotillin-like protein FloA 2 from Rhodopirellula baltica (strain DSM 10527 / NCIMB 13988 / SH1).